Reading from the N-terminus, the 107-residue chain is Cytochrome c oxidase assembly protein COX16 homolog, mitochondrial (107 aa).

Residues 1–14 (MFGYAVRRALRKSK) are Mitochondrial matrix-facing. Residues 15–37 (TLRYGVPMLLLIVGGSFGLREFS) traverse the membrane as a helical segment. Residues 38–107 (QIRYDAVKIK…PEILKTNKTT (70 aa)) lie on the Mitochondrial intermembrane side of the membrane. The segment at 80-107 (NIRGPRPWEDPDLLQGRNPEILKTNKTT) is disordered.

This sequence belongs to the COX16 family. In terms of assembly, associates with the MITRAC complex. Interacts with MT-CO2/COX; specifically interacts with newly synthesized MT-CO2/COX. Interacts with SCO1, SCO2 and COA6.

It localises to the mitochondrion inner membrane. Functionally, required for the assembly of the mitochondrial respiratory chain complex IV (CIV), also known as cytochrome c oxidase. Promotes the insertion of copper into the active site of cytochrome c oxidase subunit II (MT-CO2/COX2). Interacts specifically with newly synthesized MT-CO2/COX and its copper center-forming metallochaperones SCO1, SCO2 and COA6. Probably facilitates MT-CO2/COX2 association with the MITRAC assembly intermediate containing MT-CO1/COX1, thereby participating in merging the MT-CO1/COX1 and MT-CO2/COX2 assembly lines. In Bos taurus (Bovine), this protein is Cytochrome c oxidase assembly protein COX16 homolog, mitochondrial.